A 335-amino-acid polypeptide reads, in one-letter code: Nucleoid-associated protein PputW619_4243 (335 aa).

The protein belongs to the YejK family.

It localises to the cytoplasm. The protein localises to the nucleoid. This Pseudomonas putida (strain W619) protein is Nucleoid-associated protein PputW619_4243.